The primary structure comprises 255 residues: MAVGKNKRLSKGKKGLKKRTVDPFTRKDEYLVKAPTTFQVRDVGKTLVNRTTGLKNANDYLKGRVFEVSLADLQKDEAHSFRKVKLRVDEVQGKNCLTNFHGLDFTSDKLRSLVRKWQTLIEANVTVKTTDDYLVRLFAIAFTKRRPNQIKKTTYAQSSQIRAIRKKMTEIIQRQASSCTLTQLTKLVPEVIGREIEKSTQGIYPLQNVHIRKVKLLKSPKFDLGALLALHGEASTDDKGQKVEREFKEKVLESV.

Alanine 2 is subject to N-acetylalanine; partial.

Belongs to the eukaryotic ribosomal protein eS1 family. As to quaternary structure, component of the small ribosomal subunit. Mature ribosomes consist of a small (40S) and a large (60S) subunit. The 40S subunit contains about 33 different proteins and 1 molecule of RNA (18S). The 60S subunit contains about 49 different proteins and 3 molecules of RNA (25S, 5.8S and 5S).

It localises to the cytoplasm. The sequence is that of Small ribosomal subunit protein eS1 from Arthroderma otae (strain ATCC MYA-4605 / CBS 113480) (Microsporum canis).